Here is a 339-residue protein sequence, read N- to C-terminus: Heat-inducible transcription repressor HrcA (339 aa).

This sequence belongs to the HrcA family.

In terms of biological role, negative regulator of class I heat shock genes (grpE-dnaK-dnaJ and groELS operons). Prevents heat-shock induction of these operons. This is Heat-inducible transcription repressor HrcA from Acidothermus cellulolyticus (strain ATCC 43068 / DSM 8971 / 11B).